The following is a 476-amino-acid chain: Trigger factor (476 aa).

The PPIase FKBP-type domain occupies 169–254 (GDKVTLDYVG…VKEVAAAEEL (86 aa)). A disordered region spans residues 437–476 (SRDELLAEDEAEGEEKKAAGETKKKAAPKKKAAKKESAAE). Positions 450 to 460 (EEKKAAGETKK) are enriched in basic and acidic residues.

Belongs to the FKBP-type PPIase family. Tig subfamily.

The protein localises to the cytoplasm. It carries out the reaction [protein]-peptidylproline (omega=180) = [protein]-peptidylproline (omega=0). In terms of biological role, involved in protein export. Acts as a chaperone by maintaining the newly synthesized protein in an open conformation. Functions as a peptidyl-prolyl cis-trans isomerase. This chain is Trigger factor, found in Chelativorans sp. (strain BNC1).